Reading from the N-terminus, the 841-residue chain is Probable inorganic carbon transporter subunit DabA 1 (841 aa).

Zn(2+) is bound by residues C352, D354, H536, and C551.

It belongs to the inorganic carbon transporter (TC 9.A.2) DabA family. Forms a complex with DabB. The cofactor is Zn(2+).

Its subcellular location is the cell inner membrane. In terms of biological role, part of an energy-coupled inorganic carbon pump. This is Probable inorganic carbon transporter subunit DabA 1 from Bradyrhizobium sp. (strain ORS 278).